The sequence spans 651 residues: E3 SUMO-protein ligase PIAS1 (651 aa).

Ala2 carries the N-acetylalanine modification. The segment at 2–200 is required for interaction with MSX1; the sequence is ADSAELKQMV…KCDFTVQVQL (199 aa). The SAP domain occupies 11–45; the sequence is VMSLRVSELQVLLGYAGRNKHGRKHELLTKALHLL. The short motif at 19-23 is the LXXLL motif element; that stretch reads LQVLL. Residues Lys40 and Lys46 each participate in a glycyl lysine isopeptide (Lys-Gly) (interchain with G-Cter in SUMO2) cross-link. A Nuclear localization signal motif is present at residues 56–64; the sequence is KIKELYRRR. The PINIT domain maps to 124–288; sequence HLTSALHPVH…SMAVYLVKQL (165 aa). Glycyl lysine isopeptide (Lys-Gly) (interchain with G-Cter in SUMO2) cross-links involve residues Lys137 and Lys238. An SP-RING-type zinc finger spans residues 320-405; that stretch reads PDSEIATTSL…LKYCTDCDEI (86 aa). Zn(2+) contacts are provided by Cys351, His353, Cys374, and Cys377. A Nuclear localization signal motif is present at residues 368-380; sequence KKPTWVCPVCDKK. A Glycyl lysine isopeptide (Lys-Gly) (interchain with G-Cter in SUMO2) cross-link involves residue Lys453. Positions 462 to 473 are SUMO1-binding; that stretch reads LTIDSSSDEEEE. The disordered stretch occupies residues 465 to 511; sequence DSSSDEEEEEPPAKRTCPSLSPTSPLSNKGILSLPHQASPVSRTPSL. 4 positions are modified to phosphoserine: Ser467, Ser468, Ser483, and Ser485. A compositionally biased stretch (low complexity) spans 482-491; the sequence is PSLSPTSPLS. Thr487 is modified (phosphothreonine). A phosphoserine mark is found at Ser488 and Ser491. A Glycyl lysine isopeptide (Lys-Gly) (interchain with G-Cter in SUMO2) cross-link involves residue Lys493. Ser503, Ser510, and Ser522 each carry phosphoserine. 2 consecutive repeat copies span residues 520–523 and 557–560. Residues 520–615 form a 4 X 4 AA repeats of N-T-S-L region; the sequence is NTSLIQDYRH…GSSSGSNSSL (96 aa). One copy of the 3; approximate repeat lies at 598-601; it reads STSL. The tract at residues 600–630 is disordered; that stretch reads SLPATNGSSSGSNSSLVSSNSLRESHGHGVA. Residues 605–621 are compositionally biased toward low complexity; it reads NGSSSGSNSSLVSSNSL. Residues 612 to 615 form a 4; approximate repeat; the sequence is NSSL.

Belongs to the PIAS family. In terms of assembly, interacts with NR2C1; the interaction promotes its sumoylation. Interacts with DDX21, CSRP2, AXIN1, JUN, SATB2, PLAG1, TP53 and STAT1 (dimer), following IFNA1-stimulation. Interacts with SP3 (preferentially when SUMO-modified). Interacts with KLF8; the interaction results in SUMO ligation and repression of KLF8 transcriptional activity and of its cell cycle progression into G(1) phase. Interacts with CHUK/IKKA; this interaction induces PIAS1 phosphorylation. Interacts with PTK2/FAK1; the interaction promotes its sumoylation. Interacts with SUMO1, UBE2I, NCOA2 and AR. Interacts with NR2C1; the interaction promotes its sumoylation. Interacts with DDX5. Interacts with MTA1. Interacts with PML (isoform PML-12). Interacts with PRDM1. Interacts (via N-terminus) with MSX1 (via C-terminus); the interaction is required for the localization of both proteins to the nuclear periphery and specific binding of MSX1 to the core enhancer region in target gene promoters. In terms of processing, sumoylated. In terms of tissue distribution, expressed in kidney, heart, spleen, brain and cerebellum; weak expression, if any, in liver and lung.

Its subcellular location is the nucleus. It is found in the nucleus speckle. The protein localises to the PML body. It localises to the cytoplasm. The protein resides in the cytoskeleton. It carries out the reaction S-ubiquitinyl-[E2 ubiquitin-conjugating enzyme]-L-cysteine + [acceptor protein]-L-lysine = [E2 ubiquitin-conjugating enzyme]-L-cysteine + N(6)-ubiquitinyl-[acceptor protein]-L-lysine.. The protein operates within protein modification; protein sumoylation. Functions as an E3-type small ubiquitin-like modifier (SUMO) ligase, stabilizing the interaction between UBE2I and the substrate, and as a SUMO-tethering factor. Catalyzes sumoylation of various proteins, such as CEBPB, MRE11, MTA1, PTK2 and PML. Plays a crucial role as a transcriptional coregulation in various cellular pathways, including the STAT pathway, the p53 pathway and the steroid hormone signaling pathway. In vitro, binds A/T-rich DNA. The effects of this transcriptional coregulation, transactivation or silencing, may vary depending upon the biological context. Mediates sumoylation of MRE11, stabilizing MRE11 on chromatin during end resection. Sumoylates PML (at 'Lys-65' and 'Lys-160') and PML-RAR and promotes their ubiquitin-mediated degradation. PIAS1-mediated sumoylation of PML promotes its interaction with CSNK2A1/CK2 which in turn promotes PML phosphorylation and degradation. Enhances the sumoylation of MTA1 and may participate in its paralog-selective sumoylation. Plays a dynamic role in adipogenesis by promoting the SUMOylation and degradation of CEBPB. Mediates the nuclear mobility and localization of MSX1 to the nuclear periphery, whereby MSX1 is brought into the proximity of target myoblast differentiation factor genes. Also required for the binding of MSX1 to the core enhancer region in target gene promoter regions, independent of its sumoylation activity. Capable of binding to the core enhancer region TAAT box in the MYOD1 gene promoter. In Mus musculus (Mouse), this protein is E3 SUMO-protein ligase PIAS1 (Pias1).